A 198-amino-acid chain; its full sequence is Transcriptional regulator GfcR (198 aa).

It belongs to the purine/pyrimidine phosphoribosyltransferase family. GfcR subfamily.

The polypeptide is Transcriptional regulator GfcR (Methanocorpusculum labreanum (strain ATCC 43576 / DSM 4855 / Z)).